Consider the following 217-residue polypeptide: Large ribosomal subunit protein uL1 (217 aa).

Belongs to the universal ribosomal protein uL1 family. As to quaternary structure, component of the large ribosomal subunit (LSU). Mature N.crassa ribosomes consist of a small (40S) and a large (60S) subunit. The 40S small subunit contains 1 molecule of ribosomal RNA (18S rRNA) and at least 32 different proteins. The large 60S subunit contains 3 rRNA molecules (26S, 5.8S and 5S rRNA) and at least 42 different proteins. uL1 forms part of the L1 stalk.

The protein localises to the cytoplasm. Functionally, component of the ribosome, a large ribonucleoprotein complex responsible for the synthesis of proteins in the cell. The small ribosomal subunit (SSU) binds messenger RNAs (mRNAs) and translates the encoded message by selecting cognate aminoacyl-transfer RNA (tRNA) molecules. The large subunit (LSU) contains the ribosomal catalytic site termed the peptidyl transferase center (PTC), which catalyzes the formation of peptide bonds, thereby polymerizing the amino acids delivered by tRNAs into a polypeptide chain. The nascent polypeptides leave the ribosome through a tunnel in the LSU and interact with protein factors that function in enzymatic processing, targeting, and the membrane insertion of nascent chains at the exit of the ribosomal tunnel. uL1 forms part of the L1 stalk, a mobile element that plays a role in evacuating the exit-site tRNA. In Neurospora crassa (strain ATCC 24698 / 74-OR23-1A / CBS 708.71 / DSM 1257 / FGSC 987), this protein is Large ribosomal subunit protein uL1 (crp-74).